A 561-amino-acid chain; its full sequence is Lysine--tRNA ligase (561 aa).

2 residues coordinate Mg(2+): Glu-409 and Glu-416.

The protein belongs to the class-II aminoacyl-tRNA synthetase family. As to quaternary structure, homodimer. Mg(2+) serves as cofactor.

Its subcellular location is the cytoplasm. It catalyses the reaction tRNA(Lys) + L-lysine + ATP = L-lysyl-tRNA(Lys) + AMP + diphosphate. The chain is Lysine--tRNA ligase from Trichormus variabilis (strain ATCC 29413 / PCC 7937) (Anabaena variabilis).